A 537-amino-acid chain; its full sequence is MTDIGTLNFTWSQAIIGGFVAAGITDAVISPGSRSTPLALAMLRQAGLRCHIAIDERSAAFFGLGLAKSSHCPVLLLATSGTAPANWLPAVIEASQSGIPLILISADRPPELQDCGANQTVSQPGLFGSHTRASYTLGTPEPGFNPGYLHRVARQACEQASWPHPGPVHINQPFREPMLPSEPVLSGEMPEKISISHPDLQPDLNALGDLARRISGRPGIIVCGEMPSRDGQNEALVALATRLRSPIFAEPLSGLRFGPHDRSHLCVRYNDWLGKTDLVSQYRPEWVIRFGAYPVTRNLQKLVSEITETHALVDPWPRWIDPARRLTHLLRSEPAAICKALLDLSLVPFSETWLSALAKFEGNAEADEQRNHIHVLLEEVPDDTDLFVGNSLAIRQMDTHSGSADKTLRIYANRGASGIDGNISTAAGIAASRGRAVALIGDLTCQHDLGGLALAQGQNIVIIVVNNGGGGIFDHLPQRDLPEFTQGWRTPQNVNFEHAAMAFGLGYAATHSDDDLRPALRHAFAAGGPHLIELRQC.

This sequence belongs to the TPP enzyme family. MenD subfamily. Homodimer. It depends on Mg(2+) as a cofactor. Mn(2+) serves as cofactor. The cofactor is thiamine diphosphate.

It carries out the reaction isochorismate + 2-oxoglutarate + H(+) = 5-enolpyruvoyl-6-hydroxy-2-succinyl-cyclohex-3-ene-1-carboxylate + CO2. It participates in quinol/quinone metabolism; 1,4-dihydroxy-2-naphthoate biosynthesis; 1,4-dihydroxy-2-naphthoate from chorismate: step 2/7. Its pathway is quinol/quinone metabolism; menaquinone biosynthesis. Functionally, catalyzes the thiamine diphosphate-dependent decarboxylation of 2-oxoglutarate and the subsequent addition of the resulting succinic semialdehyde-thiamine pyrophosphate anion to isochorismate to yield 2-succinyl-5-enolpyruvyl-6-hydroxy-3-cyclohexene-1-carboxylate (SEPHCHC). The sequence is that of 2-succinyl-5-enolpyruvyl-6-hydroxy-3-cyclohexene-1-carboxylate synthase from Dechloromonas aromatica (strain RCB).